Reading from the N-terminus, the 685-residue chain is MSQLFLILCFILTHFFAIATSLNDQGLALLSFKQSIQNQSDSVFTNWNSSDSNPCSWQGVTCNYDMRVVSIRLPNKRLSGSLDPSIGSLLSLRHINLRDNDFQGKLPVELFGLKGLQSLVLSGNSFSGFVPEEIGSLKSLMTLDLSENSFNGSISLSLIPCKKLKTLVLSKNSFSGDLPTGLGSNLVHLRTLNLSFNRLTGTIPEDVGSLENLKGTLDLSHNFFSGMIPTSLGNLPELLYVDLSYNNLSGPIPKFNVLLNAGPNAFQGNPFLCGLPIKISCSTRNTQVVPSQLYTRRANHHSRLCIILTATGGTVAGIIFLASLFIYYLRKASARANKDQNNRTCHINEKLKKTTKPEFLCFKTGNSESETLDENKNQQVFMPMDPEIEFDLDQLLKASAFLLGKSRIGLVYKVVLENGLMLAVRRLEDKGWLRLKEFLADVEAMAKIKHPNVLNLKACCWSPEEKLLIYDYIPNGDLGSAIQGRPGSVSCKQLTWTVRLKILRGIAKGLTYIHEFSPKRYVHGHINTSNILLGPNLEPKVSGFGLGRIVDTSSDIRSDQISPMETSSPILSRESYYQAPEAASKMTKPSQKWDVYSFGLVILEMVTGKSPVSSEMDLVMWVESASERNKPAWYVLDPVLARDRDLEDSMVQVIKIGLACVQKNPDKRPHMRSVLESFEKLVTSI.

A signal peptide spans 1–21; that stretch reads MSQLFLILCFILTHFFAIATS. Residues 22-305 are Extracellular-facing; that stretch reads LNDQGLALLS…RRANHHSRLC (284 aa). N38 and N48 each carry an N-linked (GlcNAc...) asparagine glycan. LRR repeat units lie at residues 65-89, 90-113, 115-136, 137-161, 162-185, 186-210, 212-234, and 235-260; these read DMRV…IGSL, LSLR…LFGL, GLQS…EIGS, LKSL…LIPC, KKLK…LGSN, LVHL…VGSL, NLKG…SLGN, and LPEL…VLLN. N151 is a glycosylation site (N-linked (GlcNAc...) asparagine). An N-linked (GlcNAc...) asparagine glycan is attached at N193. N-linked (GlcNAc...) asparagine glycosylation occurs at N247. A helical transmembrane segment spans residues 306–326; it reads IILTATGGTVAGIIFLASLFI. The Cytoplasmic segment spans residues 327-685; sequence YYLRKASARA…ESFEKLVTSI (359 aa). Residues 397–682 form the Protein kinase domain; sequence KASAFLLGKS…SVLESFEKLV (286 aa). A phosphoserine mark is found at S399, S480, and S590.

Belongs to the protein kinase superfamily. Ser/Thr protein kinase family.

It localises to the cell membrane. This is Probable inactive leucine-rich repeat receptor-like protein kinase At1g66830 from Arabidopsis thaliana (Mouse-ear cress).